A 459-amino-acid chain; its full sequence is uncharacterized protein (459 aa).

2 consecutive transmembrane segments (helical) span residues Ile53–Leu75 and Ala111–Ala133. Residues His174–Asn196 are disordered.

It is found in the cell membrane. This is an uncharacterized protein from Treponema pallidum (strain Nichols).